The chain runs to 151 residues: Succinate dehydrogenase subunit 4, mitochondrial (151 aa).

A mitochondrion-targeting transit peptide spans 1–78 (MSLRRTILDL…RSISSSIGQS (78 aa)). Histidine 109 provides a ligand contact to heme. Tyrosine 121 contributes to the a ubiquinone binding site. Residues 130–150 (LIVMSLGLFQIIVLKDIILFL) form a helical membrane-spanning segment.

As to quaternary structure, component of complex II composed of eight subunits in plants: four classical SDH subunits SDH1, SDH2, SDH3 and SDH4 (a flavoprotein (FP), an iron-sulfur protein (IP), and a cytochrome b composed of a large and a small subunit.), as well as four subunits unknown in mitochondria from bacteria and heterotrophic eukaryotes. Heme is required as a cofactor. As to expression, expressed in flowers, inflorescences and stems.

It localises to the mitochondrion inner membrane. It participates in carbohydrate metabolism; tricarboxylic acid cycle. Functionally, membrane-anchoring subunit of succinate dehydrogenase (SDH). The polypeptide is Succinate dehydrogenase subunit 4, mitochondrial (Arabidopsis thaliana (Mouse-ear cress)).